Consider the following 207-residue polypeptide: Large ribosomal subunit protein bL25 (207 aa).

The interval 1–20 is disordered; the sequence is MANHQIKAQRRKDEGKGASR.

Belongs to the bacterial ribosomal protein bL25 family. CTC subfamily. As to quaternary structure, part of the 50S ribosomal subunit; part of the 5S rRNA/L5/L18/L25 subcomplex. Contacts the 5S rRNA. Binds to the 5S rRNA independently of L5 and L18.

Functionally, this is one of the proteins that binds to the 5S RNA in the ribosome where it forms part of the central protuberance. The sequence is that of Large ribosomal subunit protein bL25 from Xylella fastidiosa (strain M12).